The following is a 559-amino-acid chain: Formate--tetrahydrofolate ligase (559 aa).

An ATP-binding site is contributed by 68 to 75 (TPAGEGKT).

The protein belongs to the formate--tetrahydrofolate ligase family.

It catalyses the reaction (6S)-5,6,7,8-tetrahydrofolate + formate + ATP = (6R)-10-formyltetrahydrofolate + ADP + phosphate. It functions in the pathway one-carbon metabolism; tetrahydrofolate interconversion. The protein is Formate--tetrahydrofolate ligase of Rhizobium etli (strain CIAT 652).